The following is a 131-amino-acid chain: Small ribosomal subunit protein uS8 (131 aa).

It belongs to the universal ribosomal protein uS8 family. As to quaternary structure, part of the 30S ribosomal subunit. Contacts proteins S5 and S12.

One of the primary rRNA binding proteins, it binds directly to 16S rRNA central domain where it helps coordinate assembly of the platform of the 30S subunit. This chain is Small ribosomal subunit protein uS8, found in Legionella pneumophila subsp. pneumophila (strain Philadelphia 1 / ATCC 33152 / DSM 7513).